Consider the following 114-residue polypeptide: UPF0342 protein lp_1415 (114 aa).

This sequence belongs to the UPF0342 family.

The polypeptide is UPF0342 protein lp_1415 (Lactiplantibacillus plantarum (strain ATCC BAA-793 / NCIMB 8826 / WCFS1) (Lactobacillus plantarum)).